A 23-amino-acid polypeptide reads, in one-letter code: Phospholipase A2 homolog 4 (23 aa).

This sequence belongs to the phospholipase A2 family. Group II subfamily. K49 sub-subfamily. Homodimer; non-covalently linked (probable alternative/compact dimer conformation in solution). In terms of tissue distribution, expressed by the venom gland.

The protein localises to the secreted. Functionally, snake venom phospholipase A2 homolog that lacks enzymatic activity. Induces acute muscle damage after intramuscular injection in mice and disrupts negatively charged liposomes but not positively charged ones. Also exerts a weak anticoagulant effect only at concentrations of 40 ug/ml or higher. A model of myotoxic mechanism has been proposed: an apo Lys49-PLA2 is activated by the entrance of a hydrophobic molecule (e.g. fatty acid) at the hydrophobic channel of the protein leading to a reorientation of a monomer. This reorientation causes a transition between 'inactive' to 'active' states, causing alignment of C-terminal and membrane-docking sites (MDoS) side-by-side and putting the membrane-disruption sites (MDiS) in the same plane, exposed to solvent and in a symmetric position for both monomers. The MDoS region stabilizes the toxin on membrane by the interaction of charged residues with phospholipid head groups. Subsequently, the MDiS region destabilizes the membrane with penetration of hydrophobic residues. This insertion causes a disorganization of the membrane, allowing an uncontrolled influx of ions (i.e. calcium and sodium), and eventually triggering irreversible intracellular alterations and cell death. The protein is Phospholipase A2 homolog 4 of Bothrops asper (Terciopelo).